A 432-amino-acid chain; its full sequence is Adenylosuccinate synthetase (432 aa).

GTP-binding positions include 13 to 19 (GDEGKGK) and 41 to 43 (GHT). Residue Asp14 is the Proton acceptor of the active site. Positions 14 and 41 each coordinate Mg(2+). IMP contacts are provided by residues 14 to 17 (DEGK), 39 to 42 (NAGH), Thr130, Arg144, Gln225, Thr240, and Arg304. The active-site Proton donor is His42. A substrate-binding site is contributed by 300–306 (ATTGRSR). GTP is bound by residues Arg306, 332–334 (KLD), and 415–417 (STG).

Belongs to the adenylosuccinate synthetase family. In terms of assembly, homodimer. Mg(2+) is required as a cofactor.

It localises to the cytoplasm. It catalyses the reaction IMP + L-aspartate + GTP = N(6)-(1,2-dicarboxyethyl)-AMP + GDP + phosphate + 2 H(+). The protein operates within purine metabolism; AMP biosynthesis via de novo pathway; AMP from IMP: step 1/2. In terms of biological role, plays an important role in the de novo pathway of purine nucleotide biosynthesis. Catalyzes the first committed step in the biosynthesis of AMP from IMP. In Yersinia enterocolitica serotype O:8 / biotype 1B (strain NCTC 13174 / 8081), this protein is Adenylosuccinate synthetase.